We begin with the raw amino-acid sequence, 559 residues long: Sulfite reductase [NADPH] hemoprotein beta-component (559 aa).

Residues Cys423, Cys429, Cys468, and Cys472 each contribute to the [4Fe-4S] cluster site. Cys472 is a binding site for siroheme.

Belongs to the nitrite and sulfite reductase 4Fe-4S domain family. As to quaternary structure, alpha(8)-beta(8). The alpha component is a flavoprotein, the beta component is a hemoprotein. Requires siroheme as cofactor. It depends on [4Fe-4S] cluster as a cofactor.

It catalyses the reaction hydrogen sulfide + 3 NADP(+) + 3 H2O = sulfite + 3 NADPH + 4 H(+). It functions in the pathway sulfur metabolism; hydrogen sulfide biosynthesis; hydrogen sulfide from sulfite (NADPH route): step 1/1. In terms of biological role, component of the sulfite reductase complex that catalyzes the 6-electron reduction of sulfite to sulfide. This is one of several activities required for the biosynthesis of L-cysteine from sulfate. The chain is Sulfite reductase [NADPH] hemoprotein beta-component from Thiocapsa roseopersicina.